A 255-amino-acid polypeptide reads, in one-letter code: 3-deoxy-manno-octulosonate cytidylyltransferase (255 aa).

Belongs to the KdsB family.

The protein localises to the cytoplasm. It carries out the reaction 3-deoxy-alpha-D-manno-oct-2-ulosonate + CTP = CMP-3-deoxy-beta-D-manno-octulosonate + diphosphate. Its pathway is nucleotide-sugar biosynthesis; CMP-3-deoxy-D-manno-octulosonate biosynthesis; CMP-3-deoxy-D-manno-octulosonate from 3-deoxy-D-manno-octulosonate and CTP: step 1/1. It functions in the pathway bacterial outer membrane biogenesis; lipopolysaccharide biosynthesis. Its function is as follows. Activates KDO (a required 8-carbon sugar) for incorporation into bacterial lipopolysaccharide in Gram-negative bacteria. This chain is 3-deoxy-manno-octulosonate cytidylyltransferase, found in Pelobacter propionicus (strain DSM 2379 / NBRC 103807 / OttBd1).